A 76-amino-acid polypeptide reads, in one-letter code: Acyl carrier protein (76 aa).

Residues 1 to 74 (MFDKLKEIIA…DVVEYITEHT (74 aa)) form the Carrier domain. An O-(pantetheine 4'-phosphoryl)serine modification is found at S34.

The protein belongs to the acyl carrier protein (ACP) family. In terms of processing, 4'-phosphopantetheine is transferred from CoA to a specific serine of apo-ACP by AcpS. This modification is essential for activity because fatty acids are bound in thioester linkage to the sulfhydryl of the prosthetic group.

The protein localises to the cytoplasm. The protein operates within lipid metabolism; fatty acid biosynthesis. Functionally, carrier of the growing fatty acid chain in fatty acid biosynthesis. The polypeptide is Acyl carrier protein (Clostridium perfringens (strain ATCC 13124 / DSM 756 / JCM 1290 / NCIMB 6125 / NCTC 8237 / Type A)).